Here is a 380-residue protein sequence, read N- to C-terminus: Pregnancy-associated glycoprotein 6 (380 aa).

The signal sequence occupies residues 1 to 15 (MKWLVLLGLVSISEC). A propeptide spans 16-53 (IVKIPLRRVKTMRKTLSEKNMLNNFLKEHAYRLSQISF) (activation peptide). N57 and N74 each carry an N-linked (GlcNAc...) asparagine glycan. Residues 71-377 (YLGNITIGTP…DRGHDRIGLA (307 aa)) enclose the Peptidase A1 domain. D89 is an active-site residue. C102 and C107 form a disulfide bridge. N125 carries an N-linked (GlcNAc...) asparagine glycan. C261 and C265 are disulfide-bonded. D270 is an active-site residue. A disulfide bridge links C303 with C337.

This sequence belongs to the peptidase A1 family. In terms of tissue distribution, trophoblast and placental tissue. Produced specifically in the invasive binucleate cells of the placenta.

Its subcellular location is the secreted. The protein resides in the extracellular space. This chain is Pregnancy-associated glycoprotein 6, found in Ovis aries (Sheep).